Reading from the N-terminus, the 1621-residue chain is Nestin (1621 aa).

Methionine 1 bears the N-acetylmethionine mark. The tract at residues 1–7 (MEGCMGE) is head. The coil 1A stretch occupies residues 8 to 43 (ESFQMWELNRRLEAYLARVKALEEQNELLSAELGGL). The IF rod domain occupies 8–313 (ESFQMWELNR…TLLEAENSRL (306 aa)). Positions 44 to 55 (RAQSADTSWRAH) are linker 1. The segment at 56-151 (ADDELAALRA…VAHEEERVGL (96 aa)) is coil 1B. The linker 12 stretch occupies residues 152-173 (NAQAACAPRCPAPPRGPPAPAP). A coil 2A region spans residues 174-192 (EVEELARRLGEAWRGAVRG). The linker 2 stretch occupies residues 193 to 195 (YQE). The segment at 196–313 (RVAHMETSLG…TLLEAENSRL (118 aa)) is coil 2B. Serine 311 is subject to Phosphoserine. Residues 314-1621 (QTPGGGSKTS…DRESWSSGED (1308 aa)) form a tail region. The residue at position 315 (threonine 315) is a Phosphothreonine. Phosphoserine is present on serine 325. Threonine 338 carries the post-translational modification Phosphothreonine. Phosphoserine is present on residues serine 355 and serine 358. Position 388 is a phosphothreonine (threonine 388). A phosphoserine mark is found at serine 398, serine 471, serine 476, serine 548, serine 564, serine 578, serine 588, serine 638, serine 680, serine 702, serine 746, and serine 768. Positions 439 to 490 (SVLPGPEEPGGQRQEASTGQSPEDHASLAPPLSPDHSSLEAKDGESGGSRVF) are disordered. A disordered region spans residues 670–788 (LEKENQEPLR…PPEKVDLEPL (119 aa)). Basic and acidic residues-rich tracts occupy residues 687-725 (EALR…LKTL), 736-770 (LETE…RSLG), and 779-788 (PPEKVDLEPL). Serine 790 bears the Phosphoserine mark. Residue lysine 811 forms a Glycyl lysine isopeptide (Lys-Gly) (interchain with G-Cter in SUMO1); alternate linkage. Residue lysine 811 forms a Glycyl lysine isopeptide (Lys-Gly) (interchain with G-Cter in SUMO2); alternate linkage. Phosphoserine occurs at positions 820, 831, and 842. Threonine 851 carries the phosphothreonine modification. 4 positions are modified to phosphoserine: serine 894, serine 905, serine 913, and serine 934. A disordered region spans residues 895–1593 (LGAWNLENLR…GSALKTSWAG (699 aa)). Composition is skewed to basic and acidic residues over residues 904–936 (RSPE…RSLE), 949–960 (QRWEDTVEKDQE), 980–994 (LNLR…KEEV), and 1012–1024 (GHPE…EQRG). At serine 1016 the chain carries Phosphoserine. The segment covering 1085–1098 (GSEPAMGESAAGAE) has biased composition (low complexity). The segment covering 1099 to 1110 (PGPGQGVGGLGD) has biased composition (gly residues). 2 stretches are compositionally biased toward basic and acidic residues: residues 1129–1145 (LEAK…KDLE) and 1159–1184 (GKSR…RGAE). Phosphoserine occurs at positions 1261, 1282, 1286, 1310, 1347, 1409, 1418, and 1452. The span at 1275 to 1292 (PQEEGEESREESEEDELG) shows a compositional bias: acidic residues. The segment covering 1409-1428 (SDGFADEEESGEEGEEDQEE) has biased composition (acidic residues). 2 stretches are compositionally biased toward low complexity: residues 1440-1453 (GSSV…SSSQ) and 1460-1470 (SDSVSVSVPWD). Positions 1486–1495 (ETESQDSAEP) are enriched in polar residues. Residues serine 1496, serine 1498, serine 1577, serine 1617, and serine 1618 each carry the phosphoserine modification.

The protein belongs to the intermediate filament family. As to quaternary structure, forms homodimers and homotetramers in vitro. In mixtures with other intermediate filament proteins such as vimentin and alpha-internexin, tis protein preferentially forms heterodimers which can assemble to form intermediate filaments if nestin does not exceed 25%. Interacts with FHOD3. Constitutively phosphorylated. This increases during mitosis when the cytoplasmic intermediate filament network is reorganized. As to expression, CNS stem cells.

In terms of biological role, required for brain and eye development. Promotes the disassembly of phosphorylated vimentin intermediate filaments (IF) during mitosis and may play a role in the trafficking and distribution of IF proteins and other cellular factors to daughter cells during progenitor cell division. Required for survival, renewal and mitogen-stimulated proliferation of neural progenitor cells. The sequence is that of Nestin (NES) from Homo sapiens (Human).